The primary structure comprises 106 residues: Thioredoxin-like protein YusE (106 aa).

Residues 1–101 form the Thioredoxin domain; that stretch reads MKELQEHELD…LYELIKQKSS (101 aa). A disulfide bridge links Cys26 with Cys29.

This chain is Thioredoxin-like protein YusE (yusE), found in Bacillus subtilis (strain 168).